We begin with the raw amino-acid sequence, 316 residues long: Pantothenate kinase (316 aa).

Residue 95 to 102 (GSVAVGKS) participates in ATP binding.

This sequence belongs to the prokaryotic pantothenate kinase family.

The protein resides in the cytoplasm. It catalyses the reaction (R)-pantothenate + ATP = (R)-4'-phosphopantothenate + ADP + H(+). Its pathway is cofactor biosynthesis; coenzyme A biosynthesis; CoA from (R)-pantothenate: step 1/5. In Yersinia pseudotuberculosis serotype O:3 (strain YPIII), this protein is Pantothenate kinase.